A 157-amino-acid polypeptide reads, in one-letter code: SsrA-binding protein (157 aa).

The protein belongs to the SmpB family.

It is found in the cytoplasm. Required for rescue of stalled ribosomes mediated by trans-translation. Binds to transfer-messenger RNA (tmRNA), required for stable association of tmRNA with ribosomes. tmRNA and SmpB together mimic tRNA shape, replacing the anticodon stem-loop with SmpB. tmRNA is encoded by the ssrA gene; the 2 termini fold to resemble tRNA(Ala) and it encodes a 'tag peptide', a short internal open reading frame. During trans-translation Ala-aminoacylated tmRNA acts like a tRNA, entering the A-site of stalled ribosomes, displacing the stalled mRNA. The ribosome then switches to translate the ORF on the tmRNA; the nascent peptide is terminated with the 'tag peptide' encoded by the tmRNA and targeted for degradation. The ribosome is freed to recommence translation, which seems to be the essential function of trans-translation. The sequence is that of SsrA-binding protein from Lacticaseibacillus paracasei (strain ATCC 334 / BCRC 17002 / CCUG 31169 / CIP 107868 / KCTC 3260 / NRRL B-441) (Lactobacillus paracasei).